Reading from the N-terminus, the 544-residue chain is CTP synthase (544 aa).

The segment at 1-266 is amidoligase domain; that stretch reads MKYIFVTGGV…GKAVEELLGL (266 aa). Position 12 (serine 12) interacts with CTP. Serine 12 lines the UTP pocket. 13-18 serves as a coordination point for ATP; sequence SLGKGV. Tyrosine 53 contacts L-glutamine. Residue aspartate 70 participates in ATP binding. Positions 70 and 140 each coordinate Mg(2+). Residues 147–149, 187–192, and lysine 223 contribute to the CTP site; these read DIE and KTKPTQ. UTP contacts are provided by residues 187–192 and lysine 223; that span reads KTKPTQ. Residues 291 to 544 enclose the Glutamine amidotransferase type-1 domain; that stretch reads TIAIAGKYTA…VKAALEHQQQ (254 aa). L-glutamine is bound at residue glycine 356. The active-site Nucleophile; for glutamine hydrolysis is cysteine 383. Residues 384–387, glutamate 407, and arginine 467 contribute to the L-glutamine site; that span reads LGMQ. Residues histidine 517 and glutamate 519 contribute to the active site.

It belongs to the CTP synthase family. Homotetramer.

It carries out the reaction UTP + L-glutamine + ATP + H2O = CTP + L-glutamate + ADP + phosphate + 2 H(+). The catalysed reaction is L-glutamine + H2O = L-glutamate + NH4(+). It catalyses the reaction UTP + NH4(+) + ATP = CTP + ADP + phosphate + 2 H(+). It participates in pyrimidine metabolism; CTP biosynthesis via de novo pathway; CTP from UDP: step 2/2. Its activity is regulated as follows. Allosterically activated by GTP, when glutamine is the substrate; GTP has no effect on the reaction when ammonia is the substrate. The allosteric effector GTP functions by stabilizing the protein conformation that binds the tetrahedral intermediate(s) formed during glutamine hydrolysis. Inhibited by the product CTP, via allosteric rather than competitive inhibition. In terms of biological role, catalyzes the ATP-dependent amination of UTP to CTP with either L-glutamine or ammonia as the source of nitrogen. Regulates intracellular CTP levels through interactions with the four ribonucleotide triphosphates. The chain is CTP synthase from Deinococcus radiodurans (strain ATCC 13939 / DSM 20539 / JCM 16871 / CCUG 27074 / LMG 4051 / NBRC 15346 / NCIMB 9279 / VKM B-1422 / R1).